A 692-amino-acid polypeptide reads, in one-letter code: MAHSYLLEVGLEEMPAHVVTPSIQQLKTRVANYLTEERIDFEDIQAYSTPRRLALLISGLADKQPDVDESVKGPAKKIAQDADGNWTKAAIGFTRGQGATVDDIEFKEVKGVEYVYVEKHIQGKPVAEVLAGLNDVITAMNFPTLMRWGSFKLNFIRPIHWLVSLLDDQVVPFDILNVTAGRLTRGHRFLGHDVEIKSATDYVAALKDDFVIVDAAERKATIKDQIQAIVDQHNWVIDWDEELLEEVNNLVEWPTAFAGTFDQKYLELPEPVLITSMKDNQRFFCVRDHDGKLQPAFISVRNGNAVHLDNVIKGNERVLVPRLEDAKFFFDEDQKMTIDQYVDRLKNVSFHDQISSMYDKMARTKALANLLGQQLGLSDQELADLARAASIYKFDLTTQMVGEFAELQGIMGEIYAKRFGENEAVAAAVREHYMPISADGALPQTTVGTVLAIADKLDSIYSFFAVDMIPSGSNDPYALRRQAYGIVRMLADRKWHLNLLDFQASAKQAVEQATPALGLDYAKNADAVTDFFIDRLKQLFSLDHLRHDIVDAVTDTHVTDPAAIVEAAHVLDAHKDDADLKDQVEALTRVIRLAAKGNLSEDDVKVDPSLFENPSEGQLDQAVQALIDAKEGRSLDQQFSALLELEPVISLYFEENMIMDKDEAVKNNRLSLLTILADQTAAFGNLDQLIVK.

This sequence belongs to the class-II aminoacyl-tRNA synthetase family. In terms of assembly, tetramer of two alpha and two beta subunits.

It is found in the cytoplasm. It catalyses the reaction tRNA(Gly) + glycine + ATP = glycyl-tRNA(Gly) + AMP + diphosphate. This chain is Glycine--tRNA ligase beta subunit, found in Limosilactobacillus fermentum (strain NBRC 3956 / LMG 18251) (Lactobacillus fermentum).